The chain runs to 165 residues: Regulator of ribonuclease activity A (165 aa).

It belongs to the RraA family. In terms of assembly, homotrimer. Binds to both RNA-binding sites in the C-terminal region of Rne and to RhlB.

It is found in the cytoplasm. Globally modulates RNA abundance by binding to RNase E (Rne) and regulating its endonucleolytic activity. Can modulate Rne action in a substrate-dependent manner by altering the composition of the degradosome. Modulates RNA-binding and helicase activities of the degradosome. The protein is Regulator of ribonuclease activity A of Pseudoalteromonas translucida (strain TAC 125).